A 338-amino-acid polypeptide reads, in one-letter code: 1-aminocyclopropane-1-carboxylate deaminase (338 aa).

Lysine 51 bears the N6-(pyridoxal phosphate)lysine mark. Serine 78 serves as the catalytic Nucleophile.

The protein belongs to the ACC deaminase/D-cysteine desulfhydrase family. In terms of assembly, homotrimer. The cofactor is pyridoxal 5'-phosphate.

It catalyses the reaction 1-aminocyclopropane-1-carboxylate + H2O = 2-oxobutanoate + NH4(+). Catalyzes a cyclopropane ring-opening reaction, the irreversible conversion of 1-aminocyclopropane-1-carboxylate (ACC) to ammonia and alpha-ketobutyrate. Allows growth on ACC as a nitrogen source. This chain is 1-aminocyclopropane-1-carboxylate deaminase, found in Burkholderia vietnamiensis (strain G4 / LMG 22486) (Burkholderia cepacia (strain R1808)).